Consider the following 80-residue polypeptide: Exodeoxyribonuclease 7 small subunit (80 aa).

Belongs to the XseB family. As to quaternary structure, heterooligomer composed of large and small subunits.

The protein localises to the cytoplasm. The enzyme catalyses Exonucleolytic cleavage in either 5'- to 3'- or 3'- to 5'-direction to yield nucleoside 5'-phosphates.. Functionally, bidirectionally degrades single-stranded DNA into large acid-insoluble oligonucleotides, which are then degraded further into small acid-soluble oligonucleotides. The polypeptide is Exodeoxyribonuclease 7 small subunit (Erwinia tasmaniensis (strain DSM 17950 / CFBP 7177 / CIP 109463 / NCPPB 4357 / Et1/99)).